The primary structure comprises 272 residues: 3-methyl-2-oxobutanoate hydroxymethyltransferase (272 aa).

2 residues coordinate Mg(2+): Asp54 and Asp93. Residues 54–55 (DS), Asp93, and Lys121 each bind 3-methyl-2-oxobutanoate. Glu123 provides a ligand contact to Mg(2+). Glu190 serves as the catalytic Proton acceptor.

Belongs to the PanB family. As to quaternary structure, homodecamer; pentamer of dimers. Requires Mg(2+) as cofactor.

It is found in the cytoplasm. The catalysed reaction is 3-methyl-2-oxobutanoate + (6R)-5,10-methylene-5,6,7,8-tetrahydrofolate + H2O = 2-dehydropantoate + (6S)-5,6,7,8-tetrahydrofolate. Its pathway is cofactor biosynthesis; (R)-pantothenate biosynthesis; (R)-pantoate from 3-methyl-2-oxobutanoate: step 1/2. Its function is as follows. Catalyzes the reversible reaction in which hydroxymethyl group from 5,10-methylenetetrahydrofolate is transferred onto alpha-ketoisovalerate to form ketopantoate. In Janthinobacterium sp. (strain Marseille) (Minibacterium massiliensis), this protein is 3-methyl-2-oxobutanoate hydroxymethyltransferase.